A 95-amino-acid polypeptide reads, in one-letter code: MPSSHIVLKEETRMLGLMYAIWMNLNSFGLAIIGILLIACEIILFLTKDETIQWPHVPSNRGSKANLILKELQLLVRSTWWFHRETAQRTCLYLA.

Residues 27 to 47 (SFGLAIIGILLIACEIILFLT) traverse the membrane as a helical segment.

It is found in the membrane. This is an uncharacterized protein from Homo sapiens (Human).